A 488-amino-acid polypeptide reads, in one-letter code: Palmitoyltransferase ZDHHC14 (488 aa).

Residues 1-60 are Cytoplasmic-facing; the sequence is MPPGGGGPMKDCEYSQISTHSSSPMESPHKKKKIAARRKWEVFPGRNKFFCNGRIMMARQ. The chain crosses the membrane as a helical span at residues 61–81; it reads TGVFYLTLVLILVTSGLFFAF. The Lumenal segment spans residues 82–89; sequence DCPYLAVK. A helical membrane pass occupies residues 90-110; it reads ITPAIPAVAGILFFFVMGTLL. Residues 111–208 lie on the Cytoplasmic side of the membrane; sequence RTSFSDPGVL…GNCVGKRNYR (98 aa). Residues 165–215 form the DHHC domain; it reads KYCFTCKIFRPPRASHCSLCDNCVERFDHHCPWVGNCVGKRNYRFFYMFIL. Cys195 functions as the S-palmitoyl cysteine intermediate in the catalytic mechanism. A helical transmembrane segment spans residues 209–229; it reads FFYMFILSLSFLTVFIFAFVI. Residues 230-255 are Lumenal-facing; the sequence is THVILRSQQTGFLNALKDSPASVLEA. The chain crosses the membrane as a helical span at residues 256–276; the sequence is VVCFFSVWSIVGLSGFHTYLI. Residues 277–488 are Cytoplasmic-facing; sequence SSNQTTNEDI…VRGLVKLSSV (212 aa). Ser455 carries the phosphoserine modification.

This sequence belongs to the DHHC palmitoyltransferase family. ERF2/ZDHHC9 subfamily. Widely expressed.

It is found in the endoplasmic reticulum membrane. It localises to the golgi apparatus. The protein localises to the golgi stack membrane. The enzyme catalyses L-cysteinyl-[protein] + hexadecanoyl-CoA = S-hexadecanoyl-L-cysteinyl-[protein] + CoA. Its function is as follows. Palmitoyltransferase that could catalyze the addition of palmitate onto various protein substrates. May have a palmitoyltransferase activity toward the beta-2 adrenergic receptor/ADRB2 and thereby regulate G protein-coupled receptor signaling. May play a role in cell differentiation and apoptosis. The polypeptide is Palmitoyltransferase ZDHHC14 (Homo sapiens (Human)).